The chain runs to 425 residues: MGYFIDRRLNGKNKSMVNRQRFLRRYKSQIKQSISDAINKRSVTDIESGESVSIPIDDINEPMFHQGRGGLRHRVHPGNDHFITNDRIERPQGGGGGSGSGQGNAGQDGEGEDEFVFQISKDEYLDLLFEDLALPNLKKNQYKQLTEFKTHRAGYTSNGVPANISVVRSLQNSLARRTAMTASKRRELRELEETLKALENSEPAQLLEEERIRKAIAELKQKIARVPFIDTFDLRYKNYERRPEPSSQAVMFCLMDVSGSMDQATKDMAKRFYILLYLFLSRTYKNVDVVYIRHHTQAKEVDEQEFFYSQETGGTIVSSALKLMDEVVQERYDPAQWNIYAAQASDGDNWADDSPLCHELLAKKILPVVRYYSYIEITRRAHQTLWREYEDLQAKYENFAMQHIREPEDIYPVFRELFHRQTVDN.

Positions 84-110 (TNDRIERPQGGGGGSGSGQGNAGQDGE) are disordered. Residues 92–108 (QGGGGGSGSGQGNAGQD) are compositionally biased toward gly residues.

Belongs to the UPF0229 family.

The sequence is that of UPF0229 protein YE2273 from Yersinia enterocolitica serotype O:8 / biotype 1B (strain NCTC 13174 / 8081).